The primary structure comprises 367 residues: Uroporphyrinogen decarboxylase (367 aa).

At methionine 1 the chain carries N-acetylmethionine. Coproporphyrinogen I contacts are provided by arginine 37, alanine 39, arginine 41, arginine 50, aspartate 86, tyrosine 164, serine 219, and histidine 339. The coproporphyrinogen III site is built by arginine 37, alanine 39, and arginine 41. Residues aspartate 86, tyrosine 164, serine 219, and histidine 339 each contribute to the coproporphyrinogen III site.

It belongs to the uroporphyrinogen decarboxylase family. In terms of assembly, homodimer.

Its subcellular location is the cytoplasm. The protein resides in the cytosol. It carries out the reaction uroporphyrinogen III + 4 H(+) = coproporphyrinogen III + 4 CO2. The catalysed reaction is uroporphyrinogen I + 4 H(+) = coproporphyrinogen I + 4 CO2. Its pathway is porphyrin-containing compound metabolism; protoporphyrin-IX biosynthesis; coproporphyrinogen-III from 5-aminolevulinate: step 4/4. Functionally, catalyzes the sequential decarboxylation of the four acetate side chains of uroporphyrinogen to form coproporphyrinogen and participates in the fifth step in the heme biosynthetic pathway. Isomer I or isomer III of uroporphyrinogen may serve as substrate, but only coproporphyrinogen III can ultimately be converted to heme. In vitro also decarboxylates pentacarboxylate porphyrinogen I. In Homo sapiens (Human), this protein is Uroporphyrinogen decarboxylase.